The chain runs to 411 residues: UPF0761 membrane protein PA14_51960 (411 aa).

Transmembrane regions (helical) follow at residues 36–56, 92–112, 132–152, 174–194, 207–229, and 244–264; these read LFAV…IPAF, HLTW…LVTI, FLLY…GFAV, LLGL…YSAV, GGVF…VSLF, and IFLL…VLVC.

Belongs to the UPF0761 family.

It is found in the cell inner membrane. The protein is UPF0761 membrane protein PA14_51960 of Pseudomonas aeruginosa (strain UCBPP-PA14).